Consider the following 246-residue polypeptide: Glutamate/aspartate import permease protein GltJ (246 aa).

An ABC transmembrane type-1 domain is found at 29–230; sequence FQVTIALSIC…LINAFIMLVM (202 aa). 5 helical membrane passes run 33 to 53, 74 to 94, 104 to 124, 179 to 196, and 212 to 232; these read IALSICAWIIAFLVGSFFGIL, NVPLIVQFFTWYLVIPELLPE, LDPNIQFFLSSMLCLGLFTAA, LVKNSAIASTIGLVDMAA, and FTAITLAYVLINAFIMLVMTL.

Belongs to the binding-protein-dependent transport system permease family. HisMQ subfamily. The complex is composed of two ATP-binding proteins (GltL), two transmembrane proteins (GltJ and GltK) and a solute-binding protein (GltI).

The protein resides in the cell inner membrane. Its function is as follows. Part of the ABC transporter complex GltIJKL involved in glutamate and aspartate uptake. Probably responsible for the translocation of the substrate across the membrane. In Escherichia coli O6:H1 (strain CFT073 / ATCC 700928 / UPEC), this protein is Glutamate/aspartate import permease protein GltJ (gltJ).